The primary structure comprises 400 residues: Phosphoglycerate kinase (400 aa).

Residues 22–24, arginine 38, 61–64, arginine 119, and arginine 152 contribute to the substrate site; these read DFN and HLGR. Residues lysine 205, glycine 296, glutamate 327, and 353-356 contribute to the ATP site; that span reads GGDT.

It belongs to the phosphoglycerate kinase family. In terms of assembly, monomer.

The protein localises to the cytoplasm. It catalyses the reaction (2R)-3-phosphoglycerate + ATP = (2R)-3-phospho-glyceroyl phosphate + ADP. It participates in carbohydrate degradation; glycolysis; pyruvate from D-glyceraldehyde 3-phosphate: step 2/5. The polypeptide is Phosphoglycerate kinase (Campylobacter jejuni subsp. jejuni serotype O:23/36 (strain 81-176)).